Consider the following 760-residue polypeptide: Protein HEADING DATE 3B (760 aa).

Composition is skewed to gly residues over residues 1-12 (MATRGGGGGGGG) and 60-70 (SGGGGGGGVGG). Disordered stretches follow at residues 1 to 120 (MATR…KINK), 144 to 169 (SRST…RLAD), 236 to 262 (VKSR…EKSS), and 285 to 346 (TGII…IEET). Over residues 71-87 (SPAHSTSAASQSQSQSQ) the composition is skewed to low complexity. Over residues 94 to 107 (SLFQPFNVPSNRPG) the composition is skewed to polar residues. The span at 108-120 (HSTEKINSDKINK) shows a compositional bias: basic and acidic residues. Basic and acidic residues predominate over residues 236-248 (VKSRTPLKDKEME). Residues 349 to 355 (KRKRLLE) carry the Nuclear localization signal motif. Disordered stretches follow at residues 485 to 543 (LQQP…GVQL) and 707 to 760 (FPTV…QRDD). 3 stretches are compositionally biased toward polar residues: residues 511-522 (QRDQAATNGVSK), 531-543 (ASDN…GVQL), and 707-730 (FPTV…QTNV).

In terms of tissue distribution, expressed in mesophyll cells of young leaves, anthers, stigmas and the top of lemmas.

The protein localises to the nucleus. In terms of biological role, involved in the regulation of flowering time under short day (SD) and long day (LD) conditions. Functions as a floral promoter by negatively regulating GHD7, a repressor of the photoperiodic control of flowering. Acts as a floral activator in the LD photoperiodic pathway. Involved in blue light-induced activation of EHD1 expression to promote flowering under SD conditions. The chain is Protein HEADING DATE 3B (HD3B) from Oryza sativa subsp. japonica (Rice).